Here is a 124-residue protein sequence, read N- to C-terminus: Acidic phospholipase A2 (124 aa).

Cystine bridges form between Cys26–Cys117, Cys28–Cys44, Cys43–Cys97, Cys49–Cys124, Cys50–Cys90, Cys57–Cys83, and Cys77–Cys88. The Ca(2+) site is built by Tyr27, Gly29, and Gly31. Residue His47 is part of the active site. Ca(2+) is bound at residue Asp48. Residue Glu89 is part of the active site.

Belongs to the phospholipase A2 family. Group II subfamily. D49 sub-subfamily. Ca(2+) is required as a cofactor. Expressed by the venom gland.

It is found in the secreted. It catalyses the reaction a 1,2-diacyl-sn-glycero-3-phosphocholine + H2O = a 1-acyl-sn-glycero-3-phosphocholine + a fatty acid + H(+). Its function is as follows. Snake venom phospholipase A2 (PLA2) that inhibits collagen- and ADP-induced platelet aggregation. PLA2 catalyzes the calcium-dependent hydrolysis of the 2-acyl groups in 3-sn-phosphoglycerides. This Bothrops jararaca (Jararaca) protein is Acidic phospholipase A2.